The chain runs to 346 residues: Small ribosomal subunit biogenesis GTPase RsgA (346 aa).

Residues 1-25 are disordered; sequence MAKRKLTQNQTRRIQSNNAKTLHRH. Positions 7–20 are enriched in polar residues; the sequence is TQNQTRRIQSNNAK. The 169-residue stretch at 103–271 folds into the CP-type G domain; sequence ENEISRPDYY…LIDSPGIREF (169 aa). GTP contacts are provided by residues 159-162 and 213-221; these read NKVD and GQSGVGKSS. Zn(2+) is bound by residues C295, C300, H302, and C308.

Belongs to the TRAFAC class YlqF/YawG GTPase family. RsgA subfamily. Monomer. Associates with 30S ribosomal subunit, binds 16S rRNA. Requires Zn(2+) as cofactor.

It is found in the cytoplasm. In terms of biological role, one of several proteins that assist in the late maturation steps of the functional core of the 30S ribosomal subunit. Helps release RbfA from mature subunits. May play a role in the assembly of ribosomal proteins into the subunit. Circularly permuted GTPase that catalyzes slow GTP hydrolysis, GTPase activity is stimulated by the 30S ribosomal subunit. The polypeptide is Small ribosomal subunit biogenesis GTPase RsgA (Haemophilus influenzae (strain ATCC 51907 / DSM 11121 / KW20 / Rd)).